The chain runs to 184 residues: MQLKNLIFAAATAAALPATDAATNEPFGVISIHSGSGVQYAPINAALGSIFAGLKSQNASCSNPQDQTATFFLDDGALYLYDQSATPQELYVDRSGMGQGKIGYTTGAQPAPKNGERKGWSIDANNHLQFGGKDLIACPNSIEGAWSIWADAGVAKPGYNEGCEGIAARVEVSKNPNVCSYTSN.

Residues 1–21 form the signal peptide; that stretch reads MQLKNLIFAAATAAALPATDA. Asn-58 carries N-linked (GlcNAc...) asparagine glycosylation.

The protein belongs to the phiA family.

It is found in the secreted. The protein resides in the cell wall. Cell wall protein involved in development of asexual structures such as phialide and conidium development, and thus required for spore formation. Plays a role as a general stress protectant produced by the fungus in competition with antagonistic bacteria. This Aspergillus niger (strain ATCC MYA-4892 / CBS 513.88 / FGSC A1513) protein is Cell wall protein phiA.